The following is a 734-amino-acid chain: Paralemmin-3 (734 aa).

Positions 19–64 (SALYRQRLEVIAEKRRLQEEIGAARRELEEEKLRVERLKRKSLRER) form a coiled coil. 2 disordered regions span residues 62–100 (RERW…RNLE) and 114–217 (QSAS…LGVS). The span at 73–82 (GPERPEEPAS) shows a compositional bias: basic and acidic residues. Residues 90–116 (GQAQARIRNLEDSLFSLQSQLQLLQSA) adopt a coiled-coil conformation. A phosphoserine mark is found at S139, S158, S167, S170, and S172. Polar residues predominate over residues 186-198 (RPSTEAIGTSSEA). At S270 the chain carries Phosphoserine. Residues 297-308 (DVTGESGRDAEA) are compositionally biased toward basic and acidic residues. Disordered regions lie at residues 297-347 (DVTG…PGVE), 374-400 (PQGA…SWEV), and 413-709 (EKGR…YAPA). Phosphothreonine is present on T311. Over residues 315–336 (RLQEQFEAETCRKEEGASRDSL) the composition is skewed to basic and acidic residues. Residues S332 and S335 each carry the phosphoserine modification. Composition is skewed to basic and acidic residues over residues 413–427 (EKGR…REDG), 435–452 (TQGR…KDSE), 462–484 (DEEK…KGGE), 494–531 (LVTE…ESKT), 540–561 (IGDK…EKTG), 571–582 (EGSKKLLDREAD), 589–607 (EVDK…EQGK), and 630–647 (DEPR…KQEG). Phosphoserine is present on S451. S601 carries the post-translational modification Phosphoserine. S721 carries the phosphoserine modification. Residues C728 and C730 are each lipidated (S-palmitoyl cysteine). Residue C731 is modified to Cysteine methyl ester. Residue C731 is the site of S-farnesyl cysteine attachment. A propeptide spans 732–734 (VVM) (removed in mature form).

Belongs to the paralemmin family. In terms of assembly, interacts with SIGIRR. Palmitoylated on Cys-728 and Cys-730 and prenylated on Cys-731; which is required for membrane association.

It is found in the cytoplasm. The protein resides in the cell membrane. ATP-binding protein, which may act as a adapter in the Toll-like receptor (TLR) signaling. The chain is Paralemmin-3 (Palm3) from Mus musculus (Mouse).